The chain runs to 794 residues: Solute carrier family 26 member 9 (794 aa).

At 1 to 70 (MNKVRPRYII…WLPKYNIKGN (70 aa)) the chain is on the cytoplasmic side. The chain crosses the membrane as a helical span at residues 71 to 96 (LLNDALGGISAGTIQIPQGMAFALLA). The Extracellular segment spans residues 97–100 (NLPP). The chain crosses the membrane as a helical span at residues 101–109 (VNGLYSSFF). The Cytoplasmic portion of the chain corresponds to 110–129 (PLVVYFFMGGIPQMVPGTFA). A helical transmembrane segment spans residues 130–142 (VISIIVGNVCLKL). The Extracellular segment spans residues 143–160 (APESHFQNVTSNGTITNI). A helical transmembrane segment spans residues 161 to 189 (EAMNTARMHISATLACLTAIIQIALSFVQ). Residues 190-199 (FGFVAIYLSE) lie on the Cytoplasmic side of the membrane. The helical transmembrane segment at 200–222 (SFIRGFMTAAGLQILISVLKYIF) threads the bilayer. Residues 223–235 (GVSIPPYSGVLAI) lie on the Extracellular side of the membrane. Residues 236 to 244 (IYTFIDICK) constitute an intramembrane region (helical). Residues 245-252 (ELPKTNVA) are Extracellular-facing. The chain crosses the membrane as a helical span at residues 253–273 (SLIFALISTVLLIIVKELNMK). Over 274 to 284 (FMHKIRFPIPM) the chain is Cytoplasmic. A helical membrane pass occupies residues 285 to 297 (EIIIVIVATAVSG). Residues 298–332 (SFKLPERYHMNVVGHIPLGFPSPTVPNVTQWDEMV) lie on the Extracellular side of the membrane. Residues 333–356 (GTAFSLAIVGYVINLAMGRTLGAK) traverse the membrane as a helical segment. Residues 357–363 (HGFDVDA) lie on the Cytoplasmic side of the membrane. A helical transmembrane segment spans residues 364 to 377 (NQEMLALGSGNFFG). Topologically, residues 378–388 (SFFFIHVICCA) are extracellular. Residues 389 to 398 (LSVTLAVDGA) form a helical membrane-spanning segment. The Cytoplasmic segment spans residues 399–403 (GGKSQ). A helical transmembrane segment spans residues 404–417 (IASFFVMMSVMVTI). The Extracellular portion of the chain corresponds to 418-429 (LALGTYLNPLPK). Residues 430–455 (SVLGALIAVNLKNSLKQLSDPFYLWK) traverse the membrane as a helical segment. Topologically, residues 456-459 (KSKL) are cytoplasmic. The helical transmembrane segment at 460 to 474 (DCLVWLVSFFSTFIL) threads the bilayer. Residues 475 to 477 (GLP) are Extracellular-facing. Residues 478–496 (YGLAVGVAFSILVVIFNTQ) form a helical membrane-spanning segment. The Cytoplasmic portion of the chain corresponds to 497 to 794 (FRNGSSLNQV…MFQTEIQTAL (298 aa)). The STAS domain occupies 517-739 (VYSKVQPIDG…ITVHDAVLYA (223 aa)).

It belongs to the SLC26A/SulP transporter (TC 2.A.53) family. As to quaternary structure, homodimer.

It localises to the cell membrane. The protein resides in the endomembrane system. It carries out the reaction chloride(in) = chloride(out). The enzyme catalyses hydrogencarbonate(in) + chloride(out) = hydrogencarbonate(out) + chloride(in). Inhibited by ammonium and thiosulfate. Functionally, ion transporter that can act both as an ion channel and anion exchanger. Mainly acts as a chloride channel, which mediate uncoupled chloride anion transport in an alternate-access mechanism where a saturable binding site is alternately exposed to either one or the other side of the membrane. Also acts as a DIDS- and thiosulfate- sensitive anion exchanger the exchange of chloride for bicarbonate ions across the cell membrane. This Xenopus tropicalis (Western clawed frog) protein is Solute carrier family 26 member 9 (slc26a9).